The chain runs to 917 residues: Hexokinase HKDC1 (917 aa).

The mitochondrial-binding peptide (MBP) stretch occupies residues 1 to 20 (MFAVHLMAFYFSKLKEDQIK). Hexokinase domains lie at 16–458 (EDQI…MVTA) and 464–905 (QAQR…LITA). ATP contacts are provided by residues arginine 30 and 84 to 89 (DLGGSK). Residues 73–207 (DGSENGEFLS…DMDVDILALV (135 aa)) are hexokinase small subdomain 1. 84–91 (DLGGSKFR) lines the D-glucose 6-phosphate pocket. D-glucose is bound by residues serine 155, 172 to 173 (TK), and 208 to 209 (ND). The hexokinase large subdomain 1 stretch occupies residues 208–447 (NDTVGTMMTC…CDVRFLLSES (240 aa)). 2 residues coordinate D-glucose 6-phosphate: aspartate 209 and threonine 232. D-glucose is bound by residues asparagine 235, glutamate 260, and 291–294 (QLFE). 413–415 (DGT) provides a ligand contact to D-glucose 6-phosphate. Position 425–426 (425–426 (KR)) interacts with ATP. D-glucose 6-phosphate contacts are provided by residues serine 449 and 532 to 536 (DLGGT). The segment at 521-654 (DGTEKGKFLA…EFDLDIVAVV (134 aa)) is hexokinase small subdomain 2. Residue 532-537 (DLGGTN) coordinates ATP. Residues 602–603 (SF), 619–620 (TK), and 655–656 (ND) contribute to the D-glucose site. Positions 655–894 (NDTVGTMMTC…CDVTFMLSED (240 aa)) are hexokinase large subdomain 2. Residues aspartate 656 and threonine 679 each coordinate D-glucose 6-phosphate. Residue threonine 679 participates in ATP binding. Residues 681–682 (SN), glutamate 707, and glutamate 741 contribute to the D-glucose site. Residues 746–747 (GM), 783–787 (TKFLS), and 862–866 (TLYKL) each bind ATP. D-glucose 6-phosphate is bound by residues 860-862 (DGT) and serine 896.

The protein belongs to the hexokinase family. In terms of tissue distribution, widely expressed. Highly expressed in the brush border, surface epithelium and the myenteric plexus of the small and large intestines; the acinar centrocytes and interlobular ducts of the pancreas; and the alveolar macrophages in the lungs (at protein level). Present at moderate level in the thyroid follicular epithelium (at protein level).

Its subcellular location is the cytoplasm. It localises to the mitochondrion membrane. The protein resides in the photoreceptor inner segment. It carries out the reaction a D-hexose + ATP = a D-hexose 6-phosphate + ADP + H(+). It catalyses the reaction D-glucose + ATP = D-glucose 6-phosphate + ADP + H(+). The protein operates within carbohydrate metabolism; hexose metabolism. It functions in the pathway carbohydrate degradation; glycolysis; D-glyceraldehyde 3-phosphate and glycerone phosphate from D-glucose: step 1/4. Functionally, catalyzes the phosphorylation of hexose to hexose 6-phosphate, although at very low level compared to other hexokinases. Has low glucose phosphorylating activity compared to other hexokinases. Involved in glucose homeostasis and hepatic lipid accumulation. Required to maintain whole-body glucose homeostasis during pregnancy; however additional evidences are required to confirm this role. This chain is Hexokinase HKDC1, found in Homo sapiens (Human).